Consider the following 405-residue polypeptide: Accessory Sec system protein translocase subunit SecY2 (405 aa).

10 consecutive transmembrane segments (helical) span residues 14–34 (LFTS…LPFV), 65–85 (IFSV…MFSF), 104–124 (MYLT…RLPV), 131–151 (ILVV…LVWL), 156–176 (ASMG…LNIP), 191–211 (GIIV…ALMY), 247–267 (MYVM…GFIF), 285–305 (PLWV…FAFV), 343–363 (FSVI…LFVL), and 368–388 (LLRL…IFTI).

This sequence belongs to the SecY/SEC61-alpha family. SecY2 subfamily. As to quaternary structure, component of the accessory SecA2/SecY2 protein translocase complex required to export cell wall proteins. May form heterotrimers with SecE and SecG subunits.

The protein resides in the cell membrane. Part of the accessory SecA2/SecY2 system specifically required for export of possible cell wall proteins. The central subunit of a protein translocation channel. The chain is Accessory Sec system protein translocase subunit SecY2 from Streptococcus pneumoniae serotype 4 (strain ATCC BAA-334 / TIGR4).